Reading from the N-terminus, the 354-residue chain is MSLLSDLVNLNLTDATGKIIAEYIWIGGSGMDIRSKARTLPGPVTDPSKLPKWNYDGSSTGQAAGEDSEVILYPQAIFKDPFRKGNNILVMCDAYTPAGDPIPTNKRHNAAKIFSHPDVAKEEPWYGIEQEYTLMQKDVNWPIGWPVGGYPGPQGPYYCGVGADKAIGRDIVDAHYKACLYAGIGISGINGEVMPGQWEFQVGPVEGISSGDQVWVARYLLERITEISGVIVSFDPKPVPGDWNGAGAHCNYSTKTMRNDGGLEVIKKAIGKLQLKHKEHIAAYGEGNERRLTGKHETADINTFSWGVANRGASVRVGRDTEKEGKGYFEDRRPASNMDPYVVTSMIAETTILG.

The residue at position 2 (Ser-2) is an N-acetylserine. 2 positions are modified to phosphoserine: Ser-2 and Ser-48. Positions 19-99 constitute a GS beta-grasp domain; the sequence is IIAEYIWIGG…VMCDAYTPAG (81 aa). In terms of domain architecture, GS catalytic spans 106–354; sequence KRHNAAKIFS…SMIAETTILG (249 aa).

It belongs to the glutamine synthetase family. In terms of assembly, homooctamer. In terms of tissue distribution, expressed in the pericycle in the region of mature root.

The protein localises to the cytoplasm. The enzyme catalyses L-glutamate + NH4(+) + ATP = L-glutamine + ADP + phosphate + H(+). In terms of biological role, low-affinity glutamine synthetase. May contribute to the homeostatic control of glutamine synthesis in roots. In Arabidopsis thaliana (Mouse-ear cress), this protein is Glutamine synthetase cytosolic isozyme 1-3 (GLN1-3).